Reading from the N-terminus, the 258-residue chain is Glutamate racemase (258 aa).

Substrate contacts are provided by residues Asp11–Ser12 and Tyr43–Gly44. Cys74 acts as the Proton donor/acceptor in catalysis. A substrate-binding site is contributed by Asn75–Thr76. The Proton donor/acceptor role is filled by Cys187. Substrate is bound at residue Thr188–His189.

This sequence belongs to the aspartate/glutamate racemases family.

The catalysed reaction is L-glutamate = D-glutamate. Its pathway is cell wall biogenesis; peptidoglycan biosynthesis. Its function is as follows. Provides the (R)-glutamate required for cell wall biosynthesis. This chain is Glutamate racemase, found in Bifidobacterium animalis subsp. lactis (strain AD011).